We begin with the raw amino-acid sequence, 268 residues long: Putative S-adenosyl-L-methionine-dependent methyltransferase MAP_0663 (268 aa).

S-adenosyl-L-methionine is bound by residues Asp124 and 153 to 154 (DL).

This sequence belongs to the UPF0677 family.

Functionally, exhibits S-adenosyl-L-methionine-dependent methyltransferase activity. This Mycolicibacterium paratuberculosis (strain ATCC BAA-968 / K-10) (Mycobacterium paratuberculosis) protein is Putative S-adenosyl-L-methionine-dependent methyltransferase MAP_0663.